The primary structure comprises 79 residues: Short neurotoxin 7 (79 aa).

A signal peptide spans Met-1–Thr-21. Disulfide bonds link Cys-24-Cys-41, Cys-34-Cys-59, Cys-63-Cys-71, and Cys-72-Cys-77.

Belongs to the three-finger toxin family. Short-chain subfamily. Type III alpha-neurotoxin sub-subfamily. As to expression, expressed by the venom gland.

Its subcellular location is the secreted. Its function is as follows. Binds with high affinity to muscle nicotinic acetylcholine receptor (nAChR) and hinders acetylcholine binding to the receptor, thereby impairing neuromuscular transmission. Competes with the binding of alpha-bungarotoxin on muscle AChR (from Torpedo) (IC(50)=0.30 uM). In vivo, causes muscle paralysis, spasms and increased respiration. This Pseudonaja textilis (Eastern brown snake) protein is Short neurotoxin 7.